Here is a 458-residue protein sequence, read N- to C-terminus: Bifunctional protein GlmU (458 aa).

The pyrophosphorylase stretch occupies residues 1–230 (MHKRTAVVLA…EREILGINSR (230 aa)). Residues 9-12 (LAAG), Lys-23, Gln-73, and 78-79 (GT) each bind UDP-N-acetyl-alpha-D-glucosamine. A Mg(2+)-binding site is contributed by Asp-103. 4 residues coordinate UDP-N-acetyl-alpha-D-glucosamine: Gly-140, Glu-155, Asn-170, and Asn-228. Asn-228 lines the Mg(2+) pocket. The linker stretch occupies residues 231-251 (VQLAEAEAVLQDRLRRKWMDA). The N-acetyltransferase stretch occupies residues 252 to 458 (GVTLIDPPSV…FLGRKHKGSQ (207 aa)). 2 residues coordinate UDP-N-acetyl-alpha-D-glucosamine: Arg-333 and Lys-351. His-363 acts as the Proton acceptor in catalysis. UDP-N-acetyl-alpha-D-glucosamine-binding residues include Tyr-366 and Asn-377. Residues Ala-380, 386 to 387 (NY), Ser-405, Ala-423, and Arg-440 contribute to the acetyl-CoA site.

This sequence in the N-terminal section; belongs to the N-acetylglucosamine-1-phosphate uridyltransferase family. In the C-terminal section; belongs to the transferase hexapeptide repeat family. Homotrimer. It depends on Mg(2+) as a cofactor.

It localises to the cytoplasm. It carries out the reaction alpha-D-glucosamine 1-phosphate + acetyl-CoA = N-acetyl-alpha-D-glucosamine 1-phosphate + CoA + H(+). The catalysed reaction is N-acetyl-alpha-D-glucosamine 1-phosphate + UTP + H(+) = UDP-N-acetyl-alpha-D-glucosamine + diphosphate. Its pathway is nucleotide-sugar biosynthesis; UDP-N-acetyl-alpha-D-glucosamine biosynthesis; N-acetyl-alpha-D-glucosamine 1-phosphate from alpha-D-glucosamine 6-phosphate (route II): step 2/2. It participates in nucleotide-sugar biosynthesis; UDP-N-acetyl-alpha-D-glucosamine biosynthesis; UDP-N-acetyl-alpha-D-glucosamine from N-acetyl-alpha-D-glucosamine 1-phosphate: step 1/1. The protein operates within bacterial outer membrane biogenesis; LPS lipid A biosynthesis. Catalyzes the last two sequential reactions in the de novo biosynthetic pathway for UDP-N-acetylglucosamine (UDP-GlcNAc). The C-terminal domain catalyzes the transfer of acetyl group from acetyl coenzyme A to glucosamine-1-phosphate (GlcN-1-P) to produce N-acetylglucosamine-1-phosphate (GlcNAc-1-P), which is converted into UDP-GlcNAc by the transfer of uridine 5-monophosphate (from uridine 5-triphosphate), a reaction catalyzed by the N-terminal domain. The chain is Bifunctional protein GlmU from Heliobacterium modesticaldum (strain ATCC 51547 / Ice1).